Reading from the N-terminus, the 545-residue chain is Phenylalanine--tRNA ligase beta subunit (545 aa).

Residues 268–343 form the B5 domain; the sequence is FLHKIQNVRE…MSIGYNNLEP (76 aa). Mg(2+) is bound by residues D321, D327, E330, and D331.

The protein belongs to the phenylalanyl-tRNA synthetase beta subunit family. Type 2 subfamily. In terms of assembly, tetramer of two alpha and two beta subunits. Mg(2+) serves as cofactor.

The protein localises to the cytoplasm. The enzyme catalyses tRNA(Phe) + L-phenylalanine + ATP = L-phenylalanyl-tRNA(Phe) + AMP + diphosphate + H(+). The chain is Phenylalanine--tRNA ligase beta subunit from Saccharolobus islandicus (strain M.14.25 / Kamchatka #1) (Sulfolobus islandicus).